A 364-amino-acid polypeptide reads, in one-letter code: tRNA/tmRNA (uracil-C(5))-methyltransferase (364 aa).

Positions 189, 216, 221, 237, and 297 each coordinate S-adenosyl-L-methionine. The active-site Nucleophile is Cys-322. Glu-356 serves as the catalytic Proton acceptor.

Belongs to the class I-like SAM-binding methyltransferase superfamily. RNA M5U methyltransferase family. TrmA subfamily.

The catalysed reaction is uridine(54) in tRNA + S-adenosyl-L-methionine = 5-methyluridine(54) in tRNA + S-adenosyl-L-homocysteine + H(+). The enzyme catalyses uridine(341) in tmRNA + S-adenosyl-L-methionine = 5-methyluridine(341) in tmRNA + S-adenosyl-L-homocysteine + H(+). Its function is as follows. Dual-specificity methyltransferase that catalyzes the formation of 5-methyluridine at position 54 (m5U54) in all tRNAs, and that of position 341 (m5U341) in tmRNA (transfer-mRNA). In Campylobacter curvus (strain 525.92), this protein is tRNA/tmRNA (uracil-C(5))-methyltransferase.